The chain runs to 196 residues: Thymidine kinase (196 aa).

Residues 9-16 (SAMNAGKS) and 87-90 (DECQ) each bind ATP. Glu-88 functions as the Proton acceptor in the catalytic mechanism. Residues Cys-145, Cys-147, Cys-182, and His-185 each coordinate Zn(2+).

This sequence belongs to the thymidine kinase family. In terms of assembly, homotetramer.

It localises to the cytoplasm. The catalysed reaction is thymidine + ATP = dTMP + ADP + H(+). The protein is Thymidine kinase of Yersinia pestis.